We begin with the raw amino-acid sequence, 624 residues long: Chaperone protein HtpG (624 aa).

The a; substrate-binding stretch occupies residues 1-336 (MKGQETRGFQ…SNDLPLNVSR (336 aa)). The b stretch occupies residues 337 to 552 (EILQDSSITR…NDEMSTQMAK (216 aa)). A c region spans residues 553–624 (LFAAAGQAVP…IRRMNQLLVS (72 aa)).

Belongs to the heat shock protein 90 family. As to quaternary structure, homodimer.

The protein localises to the cytoplasm. Functionally, molecular chaperone. Has ATPase activity. This Cronobacter sakazakii (strain ATCC BAA-894) (Enterobacter sakazakii) protein is Chaperone protein HtpG.